Here is a 453-residue protein sequence, read N- to C-terminus: Ribosome biogenesis protein YTM1 (453 aa).

Residues 8–89 (VKLRFFTREQ…ETFLNVEYTR (82 aa)) are ubiquitin-like (UBL) domain. A sufficient for interaction with ERB1 and association with 66S pre-ribosomes region spans residues 99-453 (SFSNEDWVSS…INKGDNIFKS (355 aa)). WD repeat units lie at residues 101–139 (SNEDWVSSLDVGDNNKIISGSYDGVVRTWNLSGKIEKQY), 141–179 (GHSAPIRAVKYISNTRMVSGGNDRTLRLWKTKNEDLKQP), 199–237 (GHKAPVVSIDVSDNSRILSGSYDNTIGFWSTIYKEMTVV), 278–318 (SHTG…CIDT), 320–359 (TTSYSLLSLAQLPTLNLLACGSSARHITLHDPRIGSTSKI), 366–406 (GHKN…PMYT), and 417–453 (GVNDKVFAVNWSKNVGIISAGQDKKIQINKGDNIFKS).

This sequence belongs to the WD repeat WDR12/YTM1 family. Component of the NOP7 complex, composed of ERB1, NOP7 and YTM1. The complex is held together by ERB1, which interacts with NOP7 via its N-terminal domain and with YTM1 via a high-affinity interaction between the seven-bladed beta-propeller domains of the 2 proteins. The NOP7 complex associates with the 66S pre-ribosome. Interacts (via UBL domain) with MDN1 (via VWFA/MIDAS domain).

The protein resides in the nucleus. The protein localises to the nucleolus. It is found in the nucleoplasm. Its function is as follows. Component of the NOP7 complex, which is required for maturation of the 25S and 5.8S ribosomal RNAs and formation of the 60S ribosome. The chain is Ribosome biogenesis protein YTM1 from Vanderwaltozyma polyspora (strain ATCC 22028 / DSM 70294 / BCRC 21397 / CBS 2163 / NBRC 10782 / NRRL Y-8283 / UCD 57-17) (Kluyveromyces polysporus).